Here is a 144-residue protein sequence, read N- to C-terminus: Grifin (144 aa).

The Galectin domain maps to 5 to 133 (FEAFCAGGLA…EHRLAQVELA (129 aa)). A Phosphoserine modification is found at S138.

Homodimer.

The protein is Grifin (Grifin) of Mus musculus (Mouse).